Reading from the N-terminus, the 1942-residue chain is Probable helicase with zinc finger domain (1942 aa).

Residues 178–206 form a C3H1-type zinc finger; the sequence is SEEYTLCKRFLEQGICRYGAQCTSAHSQE. Ser-248 carries the post-translational modification Phosphoserine. Residue 668–675 participates in ATP binding; sequence GPYGTGKT. The short motif at 794–797 is the DEAA box element; that stretch reads DEAA. Polar residues predominate over residues 1117-1127; that stretch reads SGSTNKQQQSP. Positions 1117 to 1141 are disordered; it reads SGSTNKQQQSPPKGKSLHHTQNDHF. Thr-1163 bears the Phosphothreonine mark. Arg-1245 carries the post-translational modification Omega-N-methylarginine. Disordered regions lie at residues 1246–1345, 1386–1429, 1527–1552, and 1608–1637; these read GSPI…INLP, NLPE…GPNN, QGSAPYPHHHHPHLQHLPQPPLGLHQ, and RQVQSRSPPAVPSPPSSTDHSSHFSNFNDN. Basic and acidic residues-rich tracts occupy residues 1268–1281 and 1292–1308; these read HQEKDQHEQNRNGK and NKIRTPEKKPTEPKQVD. Residues 1399–1412 show a composition bias toward low complexity; the sequence is NQVVQQQSQLNQQP. Residue Ser-1614 is modified to Phosphoserine. A compositionally biased stretch (low complexity) spans 1623–1636; it reads SSTDHSSHFSNFND. 4 positions are modified to phosphoserine: Ser-1645, Ser-1738, Ser-1741, and Ser-1766. Disordered stretches follow at residues 1729-1779, 1792-1843, and 1870-1942; these read FHPL…TPQD, NQSS…PEDQ, and MPNK…SYFK. Over residues 1731–1745 the composition is skewed to low complexity; the sequence is PLSSRTVSSSSLPSL. 2 stretches are compositionally biased toward polar residues: residues 1761-1779 and 1792-1825; these read RISSSSVQPCSEEVSTPQD and NQSSFNFSSPESWVNTTSSTPYQNIPCNGSSRTA. 2 stretches are compositionally biased toward low complexity: residues 1876-1888 and 1920-1942; these read AESANSSSPQSSA and LSLFQELSLGSSSGSNGFYSYFK.

Belongs to the DNA2/NAM7 helicase family. Interacts with SMYD2. Interacts with POLR2A. Interacts with SMYD3; the interaction may bridge SMYD3 and RNA polymerase II. As to expression, expressed predominantly in thymus and brain. Expression is down-regulated in 28 of 95 tested cancer cell lines.

The protein resides in the nucleus. May act as a helicase that plays a role in RNA metabolism in multiple tissues and organs within the developing embryo. The polypeptide is Probable helicase with zinc finger domain (HELZ) (Homo sapiens (Human)).